The sequence spans 29 residues: Kunitz-type serine protease inhibitor RsTIQ7 (29 aa).

The BPTI/Kunitz inhibitor domain maps to 6 to 26 (QCVPTADPGPCKAYIPMWWYN).

Its function is as follows. Serine protease inhibitor. Inhibits trypsin, elastase, plasmin and kallikrein. This is Kunitz-type serine protease inhibitor RsTIQ7 from Rhipicephalus sanguineus (Brown dog tick).